The chain runs to 248 residues: Cyclin-Q (248 aa).

Position 1 is an N-acetylmethionine (M1). A compositionally biased stretch (gly residues) spans 1-12 (MEAPEGGGGGPA). The disordered stretch occupies residues 1-21 (MEAPEGGGGGPAARGPEGQPA).

Belongs to the cyclin family. Cyclin-like FAM58 subfamily. As to quaternary structure, associates with CDK10 to promote its kinase activity. Interacts with SALL1.

Its function is as follows. Activating cyclin for the cyclin-associated kinase CDK10. This is Cyclin-Q from Homo sapiens (Human).